The following is a 130-amino-acid chain: Albumin-1 F (130 aa).

The signal sequence occupies residues 1–26 (MASVKLASLIVLFATLGMFLTKNVGA). 3 disulfide bridges follow: cysteine 29-cysteine 46, cysteine 33-cysteine 48, and cysteine 41-cysteine 58. 2 propeptides span residues 64-69 (VFLRTN) and 123-130 (LLKSVSTA).

Post-translationally, the C-terminal glycine may be removed from PA1b.

In terms of biological role, PA1b binds to basic 7S globulin (BG) and stimulates its phosphorylation activity. Involved in the signal transduction system to regulate the growth and differentiation as a hormone peptide. Toxic to various insects through binding to a high affinity binding site in the insect gut. In Pisum sativum (Garden pea), this protein is Albumin-1 F.